The primary structure comprises 406 residues: Phosphatidylinositol 5-phosphate 4-kinase type-2 alpha (406 aa).

Ala-2 is subject to N-acetylalanine. Position 3 is a phosphothreonine (Thr-3). Residue Ser-14 is modified to Phosphoserine. The PIPK domain maps to 33–405 (ASDPLLSVLM…RFLDFIGHIL (373 aa)). Residues 59 to 65 (VMLMPDD) are required for interaction with PIP5K1A. An N6-acetyllysine mark is found at Lys-89 and Lys-145. Residues 287–328 (EQEEVECEENEGEEEGESDGAHPIGTPPDSPGNTLNSSPPLA) are disordered. A compositionally biased stretch (acidic residues) spans 289-304 (EEVECEENEGEEEGES).

In terms of assembly, homodimer. Interacts with PIP4K2B; the interaction may regulate localization to the nucleus. Probably interacts with PIP5K1A; the interaction inhibits PIP5K1A kinase activity. Post-translationally, phosphorylated in tyrosines. Phosphorylation is induced by light and increases kinase activity.

It localises to the cell membrane. The protein resides in the nucleus. The protein localises to the lysosome. Its subcellular location is the cytoplasm. It is found in the photoreceptor inner segment. It localises to the cell projection. The protein resides in the cilium. The protein localises to the photoreceptor outer segment. The catalysed reaction is a 1,2-diacyl-sn-glycero-3-phospho-(1D-myo-inositol-5-phosphate) + ATP = a 1,2-diacyl-sn-glycero-3-phospho-(1D-myo-inositol-4,5-bisphosphate) + ADP + H(+). The enzyme catalyses 1,2-dihexadecanoyl-sn-glycero-3-phospho-(1D-myo-inositol-5-phosphate) + ATP = 1,2-dihexadecanoyl-sn-glycero-3-phospho-(1D-myo-inositol-4,5-bisphosphate) + ADP + H(+). It carries out the reaction 1,2-dihexadecanoyl-sn-glycero-3-phospho-(1D-myo-inositol-5-phosphate) + GTP = 1,2-dihexadecanoyl-sn-glycero-3-phospho-(1D-myo-inositol-4,5-bisphosphate) + GDP + H(+). Its activity is regulated as follows. In rod outer segments, activated by light. Its function is as follows. Catalyzes the phosphorylation of phosphatidylinositol 5-phosphate (PtdIns5P) on the fourth hydroxyl of the myo-inositol ring, to form phosphatidylinositol 4,5-bisphosphate (PtdIns(4,5)P2). Has both ATP- and GTP-dependent kinase activities. May exert its function by regulating the levels of PtdIns5P, which functions in the cytosol by increasing AKT activity and in the nucleus signals through ING2. May regulate the pool of cytosolic PtdIns5P in response to the activation of tyrosine phosphorylation. Required for lysosome-peroxisome membrane contacts and intracellular cholesterol transport through modulating peroxisomal PtdIns(4,5)P2 level. In collaboration with PIP4K2B, has a role in mediating autophagy in times of nutrient stress. Required for autophagosome-lysosome fusion and the regulation of cellular lipid metabolism. Negatively regulates insulin signaling through a catalytic-independent mechanism. PIP4Ks interact with PIP5Ks and suppress PIP5K-mediated PtdIns(4,5)P2 synthesis and insulin-dependent conversion to PtdIns(3,4,5)P3. May be involved in thrombopoiesis, and the terminal maturation of megakaryocytes and regulation of their size. This is Phosphatidylinositol 5-phosphate 4-kinase type-2 alpha from Rattus norvegicus (Rat).